Reading from the N-terminus, the 131-residue chain is Snaclec A13 (131 aa).

3 disulfide bridges follow: Cys4/Cys15, Cys32/Cys125, and Cys100/Cys117. Residues Tyr11–Met126 enclose the C-type lectin domain.

Belongs to the snaclec family. As to quaternary structure, heterodimer; disulfide-linked. Expressed by the venom gland.

Its subcellular location is the secreted. Functionally, interferes with one step of hemostasis (modulation of platelet aggregation, or coagulation cascade, for example). The sequence is that of Snaclec A13 from Macrovipera lebetinus (Levantine viper).